The chain runs to 228 residues: Translin (228 aa).

Positions 86–90 (RFHEH) are DNA/RNA binding. Positions 177–198 (LDSGFRLLNLKNDSLRKRYDGL) are leucine-zipper. The residue at position 187 (K187) is an N6-acetyllysine. S190 carries the phosphoserine modification. Residue K199 is modified to N6-acetyllysine.

The protein belongs to the translin family. As to quaternary structure, ring-shaped heterooctamer of six TSN and two TSNAX subunits, DNA/RNA binding occurs inside the ring.

The protein localises to the cytoplasm. It is found in the nucleus. Functionally, DNA-binding protein that specifically recognizes consensus sequences at the breakpoint junctions in chromosomal translocations, mostly involving immunoglobulin (Ig)/T-cell receptor gene segments. Seems to recognize single-stranded DNA ends generated by staggered breaks occurring at recombination hot spots. Its function is as follows. Exhibits both single-stranded and double-stranded endoribonuclease activity. May act as an activator of RNA-induced silencing complex (RISC) by facilitating endonucleolytic cleavage of the siRNA passenger strand. This chain is Translin (TSN), found in Pongo abelii (Sumatran orangutan).